Consider the following 241-residue polypeptide: Uridylate kinase (241 aa).

15-18 contacts ATP; the sequence is KLSG. The segment at 23–28 is involved in allosteric activation by GTP; the sequence is GTEGFG. A UMP-binding site is contributed by glycine 57. ATP-binding residues include glycine 58 and arginine 62. Residues aspartate 77 and 138–145 each bind UMP; that span reads TGNPFFTT. Residues threonine 165, phenylalanine 171, and aspartate 174 each coordinate ATP.

Belongs to the UMP kinase family. As to quaternary structure, homohexamer.

The protein resides in the cytoplasm. It carries out the reaction UMP + ATP = UDP + ADP. The protein operates within pyrimidine metabolism; CTP biosynthesis via de novo pathway; UDP from UMP (UMPK route): step 1/1. Its activity is regulated as follows. Allosterically activated by GTP. Inhibited by UTP. Functionally, catalyzes the reversible phosphorylation of UMP to UDP. The protein is Uridylate kinase of Shigella dysenteriae serotype 1 (strain Sd197).